The primary structure comprises 407 residues: Na(+)-translocating NADH-quinone reductase subunit F (407 aa).

A helical membrane pass occupies residues 3–23 (IILGVVMFTLIVLALTVMILF). Positions 32–126 (GDITVEINED…NLKIELPEEI (95 aa)) constitute a 2Fe-2S ferredoxin-type domain. Cysteine 69, cysteine 75, cysteine 78, and cysteine 110 together coordinate [2Fe-2S] cluster. Positions 129–269 (VKKWTCEVIS…SGPFGEFFAK (141 aa)) constitute an FAD-binding FR-type domain.

Belongs to the NqrF family. Composed of six subunits; NqrA, NqrB, NqrC, NqrD, NqrE and NqrF. [2Fe-2S] cluster serves as cofactor. Requires FAD as cofactor.

The protein resides in the cell inner membrane. The enzyme catalyses a ubiquinone + n Na(+)(in) + NADH + H(+) = a ubiquinol + n Na(+)(out) + NAD(+). Functionally, NQR complex catalyzes the reduction of ubiquinone-1 to ubiquinol by two successive reactions, coupled with the transport of Na(+) ions from the cytoplasm to the periplasm. The first step is catalyzed by NqrF, which accepts electrons from NADH and reduces ubiquinone-1 to ubisemiquinone by a one-electron transfer pathway. In Yersinia pseudotuberculosis serotype I (strain IP32953), this protein is Na(+)-translocating NADH-quinone reductase subunit F.